We begin with the raw amino-acid sequence, 201 residues long: RILP-like protein 2 (201 aa).

One can recognise an RH1 domain in the interval 14 to 108 (SPEMALDKDP…LRDGPQMGVG (95 aa)). Positions 67-155 (LEMLEALVNQ…AQDELQCYKS (89 aa)) form a coiled coil. The 77-residue stretch at 121–197 (RPRFTLQELR…TVKSLFSFKQ (77 aa)) folds into the RH2 domain. Residues 175 to 201 (TSSPRSNASKEKSTVKSLFSFKQGKNT) form a disordered region.

It belongs to the RILPL family.

It localises to the cytoplasm. The protein localises to the cytosol. It is found in the cytoskeleton. The protein resides in the microtubule organizing center. Its subcellular location is the centrosome. It localises to the cell projection. The protein localises to the cilium. Involved in cell shape and neuronal morphogenesis, positively regulating the establishment and maintenance of dendritic spines. Plays a role in cellular protein transport. In Xenopus laevis (African clawed frog), this protein is RILP-like protein 2 (rilpl2).